An 863-amino-acid chain; its full sequence is MSRYDPSMIEPKWQKAWAEAGTFTASMEGNKPKYYVLEMFPYPSGRIHIGHVRNYTMGDVIARHKKAMGHNVLHPMGFDAFGLAAENAAMDRGIHPKDWTYKNMDDMRDQMRPLGFSIDWSRDLATCDPDYYGQQQALFIDMMEAGLIDRKNAVVNWDPVDMTVLANEQVEDGKGWRSGAEVERKELTQWFFKISDYSDELLEALDGLDDWPAKVKLMQANWIGKSRGLQFAFGLVEPVGGHDRVDVYTTRPDTLLGASFVGISPDHAIAKQLESESEDIAAFCAECRKGGTTAAEVETAEKLGFDTGLKVRHPFDTAAQLPVYIANFILMDYGTGAIFGCPAHDERDLDFARKYDLPVVSTYVPIDDEGHVLPEDGGAAYVPPKPDPVRYIRGFAGEEIQSGNDAIDAAVTFCEAEGVGQGVTKFRLRDWGLSRQRYWGCPIPVVHCDACGVVPEKKENLPIELPYDVTFDVPGNPLDRHPTWRNTPCPSCGAPALRETDTMDTFVDSSWYFARFTAPHADTPTSKAEVEYWMNVDQYIGGIEHAILHLLYSRFFARAMHITGHLPRKAIEPFDALFTQGMVTHAIYKTTDAKNRPVYHYPETVDLRDGGGYLDDGTAVEIIPSAKMSKSKNNVVDPIEIIKQYGADTARWFVLSDSPPERDVEWTASGAEAAYKHLGRVWALCDRISEAARSVSEEAQPAAGEHDTALLREMHKTIRDVTNGVDSFGFNAAIAKLYAFTNTLQKSKASHKAQREAVMTLAQLMAPMTPHLSEDIWAHQGGDGLIADAPWPVANEAMLVESTVTLPIQINGKRRSEVTVAKDASKEEVEKRALADDAVVRALDGAAPKKLIVVPGRIVNVVI.

The short motif at 41–51 is the 'HIGH' region element; the sequence is PYPSGRIHIGH. A 'KMSKS' region motif is present at residues 627–631; that stretch reads KMSKS. Lys-630 provides a ligand contact to ATP.

The protein belongs to the class-I aminoacyl-tRNA synthetase family.

The protein localises to the cytoplasm. It catalyses the reaction tRNA(Leu) + L-leucine + ATP = L-leucyl-tRNA(Leu) + AMP + diphosphate. This Jannaschia sp. (strain CCS1) protein is Leucine--tRNA ligase.